The primary structure comprises 343 residues: UDP-3-O-acylglucosamine N-acyltransferase 2 (343 aa).

H251 acts as the Proton acceptor in catalysis.

This sequence belongs to the transferase hexapeptide repeat family. LpxD subfamily. Homotrimer.

The enzyme catalyses a UDP-3-O-[(3R)-3-hydroxyacyl]-alpha-D-glucosamine + a (3R)-hydroxyacyl-[ACP] = a UDP-2-N,3-O-bis[(3R)-3-hydroxyacyl]-alpha-D-glucosamine + holo-[ACP] + H(+). It functions in the pathway bacterial outer membrane biogenesis; LPS lipid A biosynthesis. Its function is as follows. Catalyzes the N-acylation of UDP-3-O-acylglucosamine using 3-hydroxyacyl-ACP as the acyl donor. Is involved in the biosynthesis of lipid A, a phosphorylated glycolipid that anchors the lipopolysaccharide to the outer membrane of the cell. This chain is UDP-3-O-acylglucosamine N-acyltransferase 2, found in Legionella pneumophila (strain Paris).